A 625-amino-acid chain; its full sequence is Vitamin B12 transporter BtuB (625 aa).

An N-terminal signal peptide occupies residues 1–21; sequence MTIKKYTLLTALSVTAFSGWA. The TonB box signature appears at 31–38; that stretch reads DEMVVTAN. In terms of domain architecture, TBDR plug spans 43 to 157; sequence PKSSVLAPVD…IGGVINILTG (115 aa). Cyanocob(III)alamin-binding positions include S90, N97, and 115 to 116; that span reads IT. The TBDR beta-barrel domain occupies 160 to 625; the sequence is KPGTTLSAGL…EYYFTGSYNF (466 aa). A run of 3 beta stranded transmembrane segments spans residues 163 to 170, 174 to 183, and 189 to 200; these read TTLSAGLG, YQTYDGSTQQ, and TTVTLAGNYTYS. Positions 204, 217, 219, and 221 each coordinate Ca(2+). Transmembrane regions (beta stranded) follow at residues 223–233 and 238–254; these read FMGKMLWAGLE and EQFNGFARVYGFDNRSD. Ca(2+) is bound by residues Y255, D256, and D269. A run of 14 beta stranded transmembrane segments spans residues 271–285, 287–304, 317–333, 336–345, 363–379, 381–391, 395–410, 413–427, 445–454, 460–469, 484–501, 505–520, 528–540, and 546–561; these read RKLSSRTYDTGLRYK, GIYASQFIASYNRTKDYN, SLDEAEQYNLQWGNTFQ, NGMISAGADW, FTQHNTGIYLTGQQQIS, VTLEGAVRSDD, FGWHSTWQTSAGWEFI, YRLIGSYGTAYKAPN, ESKQWEGGVE, LTWRLSAYRN, YFNINKATIKGVEWTGSF, PLSHQVTLEYLDPRNA, RRAKQQVKYQLDW, and DWSVTYQYLGQRYDKD. S317 lines the cyanocob(III)alamin pocket. A cyanocob(III)alamin-binding site is contributed by R528. Residue Y562 participates in cyanocob(III)alamin binding. The next 3 beta stranded transmembrane spans lie at 569 to 583, 596 to 607, and 613 to 625; these read TVELGGVSLWDLAVS, IANLFDKDYEMV, and PGREYYFTGSYNF. The short motif at 608–625 is the TonB C-terminal box element; that stretch reads YGYQTPGREYYFTGSYNF.

Belongs to the TonB-dependent receptor family. BtuB (TC 1.B.14.3.1) subfamily.

Its subcellular location is the cell outer membrane. Involved in the active translocation of vitamin B12 (cyanocobalamin) across the outer membrane to the periplasmic space. It derives its energy for transport by interacting with the trans-periplasmic membrane protein TonB. This chain is Vitamin B12 transporter BtuB, found in Yersinia pestis bv. Antiqua (strain Antiqua).